We begin with the raw amino-acid sequence, 238 residues long: Large ribosomal subunit protein uL1 (238 aa).

The protein belongs to the universal ribosomal protein uL1 family. In terms of assembly, part of the 50S ribosomal subunit.

Functionally, binds directly to 23S rRNA. The L1 stalk is quite mobile in the ribosome, and is involved in E site tRNA release. In terms of biological role, protein L1 is also a translational repressor protein, it controls the translation of the L11 operon by binding to its mRNA. This is Large ribosomal subunit protein uL1 from Frankia alni (strain DSM 45986 / CECT 9034 / ACN14a).